A 919-amino-acid polypeptide reads, in one-letter code: Probable glucan 1,3-alpha-glucosidase (919 aa).

The signal sequence occupies residues 1–28 (MDPPPRPRPHRVAVLLLLLLASSPAARA). The active-site Nucleophile is Asp-510. The active site involves Glu-513. Residue Asp-586 is the Proton donor of the active site. A glycan (N-linked (GlcNAc...) asparagine) is linked at Asn-802.

The protein belongs to the glycosyl hydrolase 31 family. As to quaternary structure, heterodimer of a catalytic alpha subunit and a beta subunit.

It is found in the endoplasmic reticulum. The enzyme catalyses N(4)-(alpha-D-Glc-(1-&gt;3)-alpha-D-Man-(1-&gt;2)-alpha-D-Man-(1-&gt;2)-alpha-D-Man-(1-&gt;3)-[alpha-D-Man-(1-&gt;2)-alpha-D-Man-(1-&gt;3)-[alpha-D-Man-(1-&gt;2)-alpha-D-Man-(1-&gt;6)]-alpha-D-Man-(1-&gt;6)]-beta-D-Man-(1-&gt;4)-beta-D-GlcNAc-(1-&gt;4)-beta-D-GlcNAc)-L-asparaginyl-[protein] + H2O = N(4)-(alpha-D-Man-(1-&gt;2)-alpha-D-Man-(1-&gt;2)-alpha-D-Man-(1-&gt;3)-[alpha-D-Man-(1-&gt;2)-alpha-D-Man-(1-&gt;3)-[alpha-D-Man-(1-&gt;2)-alpha-D-Man-(1-&gt;6)]-alpha-D-Man-(1-&gt;6)]-beta-D-Man-(1-&gt;4)-beta-D-GlcNAc-(1-&gt;4)-beta-D-GlcNAc)-L-asparaginyl-[protein] (N-glucan mannose isomer 9A1,2,3B1,2,3) + beta-D-glucose. The catalysed reaction is N(4)-(alpha-D-Glc-(1-&gt;3)-alpha-D-Glc-(1-&gt;3)-alpha-D-Man-(1-&gt;2)-alpha-D-Man-(1-&gt;2)-alpha-D-Man-(1-&gt;3)-[alpha-D-Man-(1-&gt;2)-alpha-D-Man-(1-&gt;3)-[alpha-D-Man-(1-&gt;2)-alpha-D-Man-(1-&gt;6)]-alpha-D-Man-(1-&gt;6)]-beta-D-Man-(1-&gt;4)-beta-D-GlcNAc-(1-&gt;4)-beta-D-GlcNAc)-L-asparaginyl-[protein] + H2O = N(4)-(alpha-D-Glc-(1-&gt;3)-alpha-D-Man-(1-&gt;2)-alpha-D-Man-(1-&gt;2)-alpha-D-Man-(1-&gt;3)-[alpha-D-Man-(1-&gt;2)-alpha-D-Man-(1-&gt;3)-[alpha-D-Man-(1-&gt;2)-alpha-D-Man-(1-&gt;6)]-alpha-D-Man-(1-&gt;6)]-beta-D-Man-(1-&gt;4)-beta-D-GlcNAc-(1-&gt;4)-beta-D-GlcNAc)-L-asparaginyl-[protein] + beta-D-glucose. It participates in glycan metabolism; N-glycan metabolism. Functionally, cleaves sequentially the 2 innermost alpha-1,3-linked glucose residues from the Glc(2)Man(9)GlcNAc(2) oligosaccharide precursor of immature glycoproteins. May be required for defense response elicited by pathogen-associated molecular patterns (PAMPs). The polypeptide is Probable glucan 1,3-alpha-glucosidase (Oryza sativa subsp. japonica (Rice)).